Reading from the N-terminus, the 688-residue chain is Potassium-transporting ATPase ATP-binding subunit (688 aa).

4 consecutive transmembrane segments (helical) span residues 37 to 57, 65 to 85, 219 to 239, and 262 to 282; these read FLVY…LVGI, ILGI…AEAI, IALQ…TVSL, and VALL…SIGI. The active-site 4-aspartylphosphate intermediate is the Asp-313. ATP-binding positions include Asp-350, Glu-354, 383-390, and Lys-401; that span reads FTAKTRMS. Residues Asp-524 and Asp-528 each coordinate Mg(2+). Transmembrane regions (helical) follow at residues 594-614, 622-642, and 668-688; these read FAII…LNIM, AIFS…PLAL, and IIVP…IGIV.

Belongs to the cation transport ATPase (P-type) (TC 3.A.3) family. Type IA subfamily. The system is composed of three essential subunits: KdpA, KdpB and KdpC.

It is found in the cell membrane. It carries out the reaction K(+)(out) + ATP + H2O = K(+)(in) + ADP + phosphate + H(+). Its function is as follows. Part of the high-affinity ATP-driven potassium transport (or Kdp) system, which catalyzes the hydrolysis of ATP coupled with the electrogenic transport of potassium into the cytoplasm. This subunit is responsible for energy coupling to the transport system and for the release of the potassium ions to the cytoplasm. This is Potassium-transporting ATPase ATP-binding subunit from Clostridium botulinum (strain Alaska E43 / Type E3).